We begin with the raw amino-acid sequence, 288 residues long: Acetyl-coenzyme A carboxylase carboxyl transferase subunit beta (288 aa).

The CoA carboxyltransferase N-terminal domain maps to 34–288 (LFAKCPACKH…HLVSFHGGGQ (255 aa)). Cysteine 38, cysteine 41, cysteine 56, and cysteine 59 together coordinate Zn(2+). The segment at 38–59 (CPACKHMIYKKDLGLAKICPTC) adopts a C4-type zinc-finger fold.

The protein belongs to the AccD/PCCB family. In terms of assembly, acetyl-CoA carboxylase is a heterohexamer composed of biotin carboxyl carrier protein (AccB), biotin carboxylase (AccC) and two subunits each of ACCase subunit alpha (AccA) and ACCase subunit beta (AccD). Zn(2+) serves as cofactor.

It is found in the cytoplasm. It catalyses the reaction N(6)-carboxybiotinyl-L-lysyl-[protein] + acetyl-CoA = N(6)-biotinyl-L-lysyl-[protein] + malonyl-CoA. Its pathway is lipid metabolism; malonyl-CoA biosynthesis; malonyl-CoA from acetyl-CoA: step 1/1. Its function is as follows. Component of the acetyl coenzyme A carboxylase (ACC) complex. Biotin carboxylase (BC) catalyzes the carboxylation of biotin on its carrier protein (BCCP) and then the CO(2) group is transferred by the transcarboxylase to acetyl-CoA to form malonyl-CoA. The protein is Acetyl-coenzyme A carboxylase carboxyl transferase subunit beta of Streptococcus pyogenes serotype M49 (strain NZ131).